The primary structure comprises 209 residues: Large ribosomal subunit protein uL3 (209 aa).

The residue at position 150 (Q150) is an N5-methylglutamine.

The protein belongs to the universal ribosomal protein uL3 family. In terms of assembly, part of the 50S ribosomal subunit. Forms a cluster with proteins L14 and L19. Methylated by PrmB.

One of the primary rRNA binding proteins, it binds directly near the 3'-end of the 23S rRNA, where it nucleates assembly of the 50S subunit. This chain is Large ribosomal subunit protein uL3, found in Proteus mirabilis (strain HI4320).